A 184-amino-acid polypeptide reads, in one-letter code: uncharacterized protein (184 aa).

It belongs to the PhzF family.

Its subcellular location is the cytoplasm. It localises to the nucleus. This is an uncharacterized protein from Schizosaccharomyces pombe (strain 972 / ATCC 24843) (Fission yeast).